A 512-amino-acid polypeptide reads, in one-letter code: Maturase K (512 aa).

It belongs to the intron maturase 2 family. MatK subfamily.

It localises to the plastid. The protein localises to the chloroplast. Functionally, usually encoded in the trnK tRNA gene intron. Probably assists in splicing its own and other chloroplast group II introns. This is Maturase K from Lilium canadense (Canada lily).